Consider the following 288-residue polypeptide: Probable prolyl 4-hydroxylase 9 (288 aa).

The Cytoplasmic portion of the chain corresponds to 1 to 12; it reads MKSRLKSYRRKK. The chain crosses the membrane as a helical; Signal-anchor for type II membrane protein span at residues 13–33; sequence LGLATVIVFCSLCFLFGFYGS. Residues 34 to 288 lie on the Lumenal side of the membrane; the sequence is TLLSQNVPRV…KWIRDQDQEE (255 aa). Positions 164–283 constitute a Fe2OG dioxygenase domain; sequence HGESFNILRY…KWVATKWIRD (120 aa). His-182 and Asp-184 together coordinate Fe cation. Asn-221 and Asn-255 each carry an N-linked (GlcNAc...) asparagine glycan. His-264 contacts Fe cation. Lys-274 serves as a coordination point for 2-oxoglutarate.

It belongs to the P4HA family. Fe(2+) serves as cofactor. L-ascorbate is required as a cofactor.

Its subcellular location is the endoplasmic reticulum membrane. The protein resides in the golgi apparatus. The enzyme catalyses L-prolyl-[collagen] + 2-oxoglutarate + O2 = trans-4-hydroxy-L-prolyl-[collagen] + succinate + CO2. In terms of biological role, catalyzes the post-translational formation of 4-hydroxyproline in -Xaa-Pro-Gly- sequences in proline-rich peptide sequences of plant glycoproteins and other proteins. Hydroxyprolines are important constituent of many plant cell wall glycoproteins such as extensins, hydroxyproline-rich glycoproteins, lectins and arabinogalactan proteins. In Arabidopsis thaliana (Mouse-ear cress), this protein is Probable prolyl 4-hydroxylase 9.